The chain runs to 255 residues: Epoxyqueuosine reductase QueH (255 aa).

The [4Fe-4S] cluster site is built by Cys44, Cys45, Cys128, and Cys131. A disulfide bridge connects residues Cys210 and Cys212.

It belongs to the QueH family.

The enzyme catalyses epoxyqueuosine(34) in tRNA + AH2 = queuosine(34) in tRNA + A + H2O. It functions in the pathway tRNA modification; tRNA-queuosine biosynthesis. Catalyzes the conversion of epoxyqueuosine (oQ) to queuosine (Q), which is a hypermodified base found in the wobble positions of tRNA(Asp), tRNA(Asn), tRNA(His) and tRNA(Tyr). This chain is Epoxyqueuosine reductase QueH, found in Streptococcus pyogenes serotype M1.